The chain runs to 112 residues: Large ribosomal subunit protein eL36y (112 aa).

Residues 79 to 88 (KLGTHKRAKR) are compositionally biased toward basic residues. Residues 79–112 (KLGTHKRAKRKREEMSSVLRKMRSGGGGATEKKK) are disordered. The span at 102–112 (SGGGGATEKKK) shows a compositional bias: gly residues.

The protein belongs to the eukaryotic ribosomal protein eL36 family.

This Arabidopsis thaliana (Mouse-ear cress) protein is Large ribosomal subunit protein eL36y (RPL36B).